The primary structure comprises 430 residues: Adenylosuccinate synthetase (430 aa).

GTP-binding positions include Gly12 to Lys18 and Gly40 to Thr42. The active-site Proton acceptor is Asp13. Positions 13 and 40 each coordinate Mg(2+). IMP-binding positions include Asp13–Lys16, Asn38–His41, Thr128, Arg142, Gln223, Thr238, and Arg302. Catalysis depends on His41, which acts as the Proton donor. Thr298–Arg304 is a substrate binding site. GTP is bound by residues Arg304, Ser330–Asp332, and Ser412–Gly414.

This sequence belongs to the adenylosuccinate synthetase family. As to quaternary structure, homodimer. Requires Mg(2+) as cofactor.

Its subcellular location is the cytoplasm. It carries out the reaction IMP + L-aspartate + GTP = N(6)-(1,2-dicarboxyethyl)-AMP + GDP + phosphate + 2 H(+). It functions in the pathway purine metabolism; AMP biosynthesis via de novo pathway; AMP from IMP: step 1/2. Functionally, plays an important role in the de novo pathway of purine nucleotide biosynthesis. Catalyzes the first committed step in the biosynthesis of AMP from IMP. This is Adenylosuccinate synthetase from Streptococcus equi subsp. equi (strain 4047).